A 526-amino-acid polypeptide reads, in one-letter code: mRNA export factor ICP27 homolog (526 aa).

The Zn(2+) site is built by cysteine 239, histidine 344, cysteine 346, and cysteine 351. The CHC2-type zinc-finger motif lies at cysteine 239–cysteine 351.

This sequence belongs to the HHV-1 ICP27 protein family.

The protein resides in the virion tegument. The protein localises to the virion. It is found in the host nucleus. Its subcellular location is the host cytoplasm. Immediate early (EI) protein that plays many roles during productive infection including regulation of viral gene expression and nuclear export of intronless viral RNAs. This Human herpesvirus 7 (strain JI) (HHV-7) protein is mRNA export factor ICP27 homolog.